The primary structure comprises 255 residues: Adenylate dimethylallyltransferase (255 aa).

The protein belongs to the isopentenyl transferase family.

The catalysed reaction is dimethylallyl diphosphate + AMP = N(6)-(dimethylallyl)adenosine 5'-phosphate + diphosphate. Functionally, transfers dimethylallyl groups to AMP as part of the biosynthesis of cytokinin phytohormones. In Rhodococcoides fascians (Rhodococcus fascians), this protein is Adenylate dimethylallyltransferase (fas4).